Here is a 438-residue protein sequence, read N- to C-terminus: UDP-N-acetylmuramoylalanine--D-glutamate ligase (438 aa).

112-118 (GSNGKST) is an ATP binding site.

It belongs to the MurCDEF family.

The protein localises to the cytoplasm. It catalyses the reaction UDP-N-acetyl-alpha-D-muramoyl-L-alanine + D-glutamate + ATP = UDP-N-acetyl-alpha-D-muramoyl-L-alanyl-D-glutamate + ADP + phosphate + H(+). It participates in cell wall biogenesis; peptidoglycan biosynthesis. Its function is as follows. Cell wall formation. Catalyzes the addition of glutamate to the nucleotide precursor UDP-N-acetylmuramoyl-L-alanine (UMA). The chain is UDP-N-acetylmuramoylalanine--D-glutamate ligase from Pectobacterium atrosepticum (strain SCRI 1043 / ATCC BAA-672) (Erwinia carotovora subsp. atroseptica).